Consider the following 290-residue polypeptide: Oxaloacetate decarboxylase (290 aa).

Substrate is bound at residue Ser53. Asp91 lines the Mg(2+) pocket. The substrate site is built by Arg162 and His238.

Belongs to the isocitrate lyase/PEP mutase superfamily. Oxaloacetate decarboxylase family. Homotetramer; dimer of dimers. Requires Mg(2+) as cofactor.

The catalysed reaction is oxaloacetate + H(+) = pyruvate + CO2. Its function is as follows. Catalyzes the decarboxylation of oxaloacetate into pyruvate. Seems to play a role in maintaining cellular concentrations of bicarbonate and pyruvate. This Ectopseudomonas mendocina (strain ymp) (Pseudomonas mendocina) protein is Oxaloacetate decarboxylase.